The sequence spans 202 residues: MYKRLVQEFFPKLDFENLEKYVNLIEFSNKNFNLTAFSGDILWKEGIFESIFTMNFIVGLVNNKENKKLKILDIGAGSGFPSIPFLITNPEIELTISESMQKRCQFLKDISEKLDLKFNLICKPVQEIDPQKFDIITARAVANLEKLEKITKKIHFPKTLLAFIKGPKVFNEVQNCKNCNYKIIKVNNNINKKIFIAFKQVS.

S-adenosyl-L-methionine contacts are provided by residues glycine 75, phenylalanine 80, valine 125–glutamine 126, and arginine 139.

It belongs to the methyltransferase superfamily. RNA methyltransferase RsmG family.

The protein localises to the cytoplasm. Its function is as follows. Specifically methylates the N7 position of a guanine in 16S rRNA. The protein is Ribosomal RNA small subunit methyltransferase G of Mesomycoplasma hyopneumoniae (strain 7448) (Mycoplasma hyopneumoniae).